The chain runs to 202 residues: UPF0301 protein Meso_0753 (202 aa).

The protein belongs to the UPF0301 (AlgH) family.

This chain is UPF0301 protein Meso_0753, found in Chelativorans sp. (strain BNC1).